The following is a 183-amino-acid chain: COMM domain-containing protein 8 (183 aa).

In terms of domain architecture, COMM spans 116-183; it reads QLQDFDWQVK…AANKVVLQLK (68 aa).

Belongs to the COMM domain-containing protein 8 family. Component of the commander complex consisting of the CCC subcomplex and the retriever subcomplex. Component of the CCC (COMMD/CCDC22/CCDC93) subcomplex consisting of COMMD1, COMMD2, COMMD3, COMMD4, COMMD5, COMMD6, COMMD7, COMMD8, COMMD9, COMMD10, CCDC22 and CCDC93; within the complex forms a heterodimer with COMMD4. Interacts with RELA, RELB, NFKB1/p105. Interacts with CCDC22, CCDC93, SCNN1B, CUL1, CUL2, CUL3, CUL4A, CUL4B, CUL5. As to expression, widely expressed with highest expression in thyroid.

The protein localises to the cytoplasm. Its subcellular location is the nucleus. Its function is as follows. Scaffold protein in the commander complex that is essential for endosomal recycling of transmembrane cargos; the commander complex is composed of the CCC subcomplex and the retriever subcomplex. May modulate activity of cullin-RING E3 ubiquitin ligase (CRL) complexes. May down-regulate activation of NF-kappa-B. This chain is COMM domain-containing protein 8 (COMMD8), found in Homo sapiens (Human).